Consider the following 332-residue polypeptide: 3'(2'),5'-bisphosphate nucleotidase (332 aa).

The Proton acceptor role is filled by D49. Mg(2+)-binding residues include E73, D129, I131, and D132. T134 functions as the Proton acceptor in the catalytic mechanism. Residues T134, S245, K248, R262, and D274 each coordinate adenosine 3',5'-bisphosphate. AMP-binding residues include S245, K248, R262, and D274. D274 serves as a coordination point for Mg(2+).

It belongs to the inositol monophosphatase superfamily. The cofactor is Mg(2+).

The catalysed reaction is 3'-phosphoadenylyl sulfate + H2O = adenosine 5'-phosphosulfate + phosphate. It carries out the reaction adenosine 3',5'-bisphosphate + H2O = AMP + phosphate. The enzyme catalyses adenosine 2',5'-bisphosphate + H2O = AMP + phosphate. It catalyses the reaction 1D-myo-inositol 1,4-bisphosphate + H2O = 1D-myo-inositol 4-phosphate + phosphate. The catalysed reaction is 1D-myo-inositol 1,3,4-trisphosphate + H2O = 1D-myo-inositol 3,4-bisphosphate + phosphate. Its function is as follows. Phosphatase that converts adenosine 3'-phosphate 5'-phosphosulfate (PAPS) to adenosine 5'-phosphosulfate (APS) and 3'(2')-phosphoadenosine 5'-phosphate (PAP) to AMP. Is also able to hydrolyze inositol 1,4-bisphosphate and inositol 1,3,4-trisphosphate. The sequence is that of 3'(2'),5'-bisphosphate nucleotidase from Dictyostelium discoideum (Social amoeba).